The primary structure comprises 894 residues: Low-affinity phosphate transporter PHO91 (894 aa).

Positions 1–256 (MKFSHSLQFN…NTNLKQNYLN (256 aa)) constitute an SPX domain. Disordered stretches follow at residues 124–160 (QHQL…LTDM) and 293–321 (RPSN…EDGN). Residues 132 to 144 (RNRKSKSQQRQRR) are compositionally biased toward basic residues. Positions 151–160 (TDSNPSLTDM) are enriched in polar residues. Residues Ser-295, Ser-311, and Ser-312 each carry the phosphoserine modification. Helical transmembrane passes span 430–450 (LKFL…LTPF), 474–494 (TIPL…FPVI), 511–531 (FILS…FTLA), 557–577 (FILL…SNVA), 602–622 (ALIL…PIAS), 642–662 (FMIA…LLII), 682–702 (FTLK…LWCL), 706–726 (ISGI…VFFG), 738–758 (FMWT…AVSS), 777–797 (PIFI…TFVS), 799–819 (TVAA…LPSG), 824–844 (LLIV…TSGF), and 874–894 (SLLS…VMGF).

This sequence belongs to the CitM (TC 2.A.11) transporter family. In terms of processing, ubiquitinated by RSP5. RSP5-mediated ubiquitination initiates internalization and degradation by the endocytic pathway.

The protein localises to the vacuole membrane. In terms of biological role, vacuolar phosphate transporter that probably exports phosphate from the vacuolar lumen to the cytosol. This is Low-affinity phosphate transporter PHO91 (PHO91) from Saccharomyces cerevisiae (strain ATCC 204508 / S288c) (Baker's yeast).